A 412-amino-acid chain; its full sequence is Putative odorant receptor 85d (412 aa).

Residues 1 to 56 lie on the Cytoplasmic side of the membrane; the sequence is MLTKKDTQSAKEQEKLKAIPLHSFLKYANVFYLSIGMMAYDHKYSQKWKEVLLHWT. A helical membrane pass occupies residues 57 to 77; sequence FIAQMVNLNTVLISELIYVFL. Residues 78–84 are Extracellular-facing; it reads AIGKGSN. A helical membrane pass occupies residues 85 to 105; it reads FLEATMNLSFIGFVIVGDFKI. The Cytoplasmic portion of the chain corresponds to 106-152; the sequence is WNISRQRKRLTQVVSRLEELHPQGLAQQEPYNIGHHLSGYSRYSKFY. The chain crosses the membrane as a helical span at residues 153–173; the sequence is FGMHMVLIWTYNLYWAVYYLV. Residues 174–219 are Extracellular-facing; that stretch reads CDFWLGMRQFERMLPYYCWVPWDWSTGYSYYFMYISQNIGGQACLS. Residues 220–240 form a helical membrane-spanning segment; sequence GQLAADMLMCALVTLVVMHFI. Over 241–282 the chain is Cytoplasmic; that stretch reads RLSAHIESHVAGIGSFQHDLEFLQATVAYHQSLIHLCQDINE. A helical membrane pass occupies residues 283–303; the sequence is IFGVSLLSNFVSSSFIICFVG. At 304 to 314 the chain is on the extracellular side; it reads FQMTIGSKIDN. A helical membrane pass occupies residues 315–335; that stretch reads LVMLVLFLFCAMVQVFMIATH. Residues 336–382 lie on the Cytoplasmic side of the membrane; the sequence is AQRLVDASEQIGQAVYNHDWFRADLRYRKMLILIIKRAQQPSRLKAT. Residues 383–403 form a helical membrane-spanning segment; sequence MFLNISLVTVSDLLQLSYKFF. Topologically, residues 404 to 412 are extracellular; the sequence is ALLRTMYVN.

It belongs to the insect chemoreceptor superfamily. Heteromeric odorant receptor channel (TC 1.A.69) family. Or49a subfamily. Interacts with Orco. Complexes exist early in the endomembrane system in olfactory sensory neurons (OSNs), coupling these complexes to the conserved ciliary trafficking pathway. Expressed in olfactory sensory neurons in the maxillary palp.

The protein resides in the cell membrane. Its function is as follows. Odorant receptor which mediates acceptance or avoidance behavior, depending on its substrates. The odorant receptor repertoire encodes a large collection of odor stimuli that vary widely in identity, intensity, and duration. May form a complex with Orco to form odorant-sensing units, providing sensitive and prolonged odorant signaling and calcium permeability. In Drosophila melanogaster (Fruit fly), this protein is Putative odorant receptor 85d (Or85d).